A 361-amino-acid chain; its full sequence is Deoxyhypusine hydroxylase (361 aa).

HEAT-like PBS-type repeat units lie at residues 59–85, 94–120, 183–211, and 216–242; these read LKHE…VLEN, VRHE…YMQD, QRYR…GFRD, and FRHE…RLRD. Fe cation-binding residues include His-61, Glu-62, His-96, and Glu-97. Fe cation-binding residues include His-218, Glu-219, His-251, and Glu-252.

Belongs to the deoxyhypusine hydroxylase family. Fe(2+) serves as cofactor.

Its subcellular location is the cytoplasm. The protein localises to the nucleus. The enzyme catalyses [eIF5A protein]-deoxyhypusine + AH2 + O2 = [eIF5A protein]-hypusine + A + H2O. Its pathway is protein modification; eIF5A hypusination. Functionally, catalyzes the hydroxylation of the N(6)-(4-aminobutyl)-L-lysine intermediate to form hypusine, an essential post-translational modification only found in mature eIF-5A factor. This Cryptococcus neoformans var. neoformans serotype D (strain B-3501A) (Filobasidiella neoformans) protein is Deoxyhypusine hydroxylase.